A 245-amino-acid chain; its full sequence is MKVSIFITCVADVFYPEVGKDVVEILEDLGCEVDFPKTQTCCGQPAYNSGYVKETKTAAKHMIEAFASSEYVVAPSGSCAMMVHEFSSLFSESEADWKKKATELGNKTYEFTQFLVEVLGKEDLGAELHKKATVHTSCHMSRLMGIKEPPQKLLKCVKGLEVVSLPHNYDCCGFGGTFSVKMPEISEQMVEEKVKHIMETGAELLIGMDCSCLMNIKGRLTRNGYPIDVKHIAQVLNEDRKQGGI.

The protein belongs to the LutA/YkgE family.

In terms of biological role, is involved in L-lactate degradation and allows cells to grow with lactate as the sole carbon source. The sequence is that of Lactate utilization protein A 1 from Bacillus mycoides (strain KBAB4) (Bacillus weihenstephanensis).